A 99-amino-acid chain; its full sequence is MALTPQDIGRIANLARLELSPAESERMLTQLNGFFGIVEKMRAVDTAGLEPLSHPVAAIQDIALRLREDTASEPDQREANQRSAPAVERGLFLVPKVIE.

The protein belongs to the GatC family. Heterotrimer of A, B and C subunits.

It catalyses the reaction L-glutamyl-tRNA(Gln) + L-glutamine + ATP + H2O = L-glutaminyl-tRNA(Gln) + L-glutamate + ADP + phosphate + H(+). The enzyme catalyses L-aspartyl-tRNA(Asn) + L-glutamine + ATP + H2O = L-asparaginyl-tRNA(Asn) + L-glutamate + ADP + phosphate + 2 H(+). Its function is as follows. Allows the formation of correctly charged Asn-tRNA(Asn) or Gln-tRNA(Gln) through the transamidation of misacylated Asp-tRNA(Asn) or Glu-tRNA(Gln) in organisms which lack either or both of asparaginyl-tRNA or glutaminyl-tRNA synthetases. The reaction takes place in the presence of glutamine and ATP through an activated phospho-Asp-tRNA(Asn) or phospho-Glu-tRNA(Gln). This chain is Aspartyl/glutamyl-tRNA(Asn/Gln) amidotransferase subunit C, found in Paracidovorax citrulli (strain AAC00-1) (Acidovorax citrulli).